We begin with the raw amino-acid sequence, 355 residues long: Protein DVR-1 (355 aa).

The first 15 residues, 1–15 (MFLVLLRACLLTLSL), serve as a signal peptide directing secretion. A propeptide spanning residues 16–240 (CSPAEDDGLV…PLQCRSRRKR (225 aa)) is cleaved from the precursor. Residues asparagine 108, asparagine 179, and asparagine 296 are each glycosylated (N-linked (GlcNAc...) asparagine). Cystine bridges form between cysteine 254/cysteine 320, cysteine 283/cysteine 352, and cysteine 287/cysteine 354.

It belongs to the TGF-beta family. As to quaternary structure, homodimer. Abundant in ovaries and eggs, and equally distributed among all blastomeres.

The protein resides in the secreted. In terms of biological role, serves to facilitate the differentiation of either mesoderm or endoderm either as a cofactor in an instructive signal or by providing permissive environment. This chain is Protein DVR-1 (dvr1), found in Danio rerio (Zebrafish).